The chain runs to 216 residues: Adenylate kinase (216 aa).

ATP is bound at residue 10 to 15 (GAGKGT). The NMP stretch occupies residues 30–59 (STGDIFRANIKEKTPLGIEAKRYIDNGQLV). AMP contacts are provided by residues T31, R36, 57–59 (QLV), 85–88 (GFPR), and Q92. The interval 126 to 163 (GRRVCTSCGASYHIRFNPPKIEGKCDICDNELIQRKDD) is LID. R127 lines the ATP pocket. The Zn(2+) site is built by C130 and C133. An ATP-binding site is contributed by 136–137 (SY). Residues C150 and C153 each contribute to the Zn(2+) site. AMP is bound by residues R160 and R171. Position 199 (E199) interacts with ATP.

The protein belongs to the adenylate kinase family. As to quaternary structure, monomer.

The protein localises to the cytoplasm. The enzyme catalyses AMP + ATP = 2 ADP. It participates in purine metabolism; AMP biosynthesis via salvage pathway; AMP from ADP: step 1/1. Its function is as follows. Catalyzes the reversible transfer of the terminal phosphate group between ATP and AMP. Plays an important role in cellular energy homeostasis and in adenine nucleotide metabolism. This chain is Adenylate kinase, found in Clostridium botulinum (strain 657 / Type Ba4).